Reading from the N-terminus, the 605-residue chain is Probable Xaa-Pro aminopeptidase P (605 aa).

Mn(2+) contacts are provided by Asp-402, Asp-413, Glu-511, and Glu-525.

Belongs to the peptidase M24B family. Mn(2+) is required as a cofactor.

It catalyses the reaction Release of any N-terminal amino acid, including proline, that is linked to proline, even from a dipeptide or tripeptide.. Its function is as follows. Catalyzes the removal of a penultimate prolyl residue from the N-termini of peptides. In Leptosphaeria maculans (strain JN3 / isolate v23.1.3 / race Av1-4-5-6-7-8) (Blackleg fungus), this protein is Probable Xaa-Pro aminopeptidase P (AMPP).